The following is an 89-amino-acid chain: Small ribosomal subunit protein uS15 (89 aa).

Belongs to the universal ribosomal protein uS15 family. As to quaternary structure, part of the 30S ribosomal subunit. Forms a bridge to the 50S subunit in the 70S ribosome, contacting the 23S rRNA.

In terms of biological role, one of the primary rRNA binding proteins, it binds directly to 16S rRNA where it helps nucleate assembly of the platform of the 30S subunit by binding and bridging several RNA helices of the 16S rRNA. Its function is as follows. Forms an intersubunit bridge (bridge B4) with the 23S rRNA of the 50S subunit in the ribosome. The sequence is that of Small ribosomal subunit protein uS15 from Shewanella piezotolerans (strain WP3 / JCM 13877).